The primary structure comprises 59 residues: uncharacterized protein (59 aa).

It is found in the mitochondrion. This is an uncharacterized protein from Ascobolus immersus.